We begin with the raw amino-acid sequence, 206 residues long: Translation initiation factor IF-3 (206 aa).

This sequence belongs to the IF-3 family. As to quaternary structure, monomer.

It is found in the cytoplasm. In terms of biological role, IF-3 binds to the 30S ribosomal subunit and shifts the equilibrium between 70S ribosomes and their 50S and 30S subunits in favor of the free subunits, thus enhancing the availability of 30S subunits on which protein synthesis initiation begins. This is Translation initiation factor IF-3 from Shigella flexneri.